Reading from the N-terminus, the 273-residue chain is SUMO-1 cysteine protease S273R (273 aa).

Catalysis depends on residues H168 and N187. Q226 contributes to the substrate binding site. The Nucleophile role is filled by C232.

The protein belongs to the peptidase C63 family.

The protein resides in the host cytoplasm. It is found in the virion. Cysteine protease that plays several role during infection including processing of the structural polyprotein or inhibition of the host immune response. Catalyzes the maturation of the pp220 and pp62 polyprotein precursors into core-shell proteins. Plays a role in the disruption of host pyroptosis via specific cleavage of gasdermin D/GSDMD. In addition, strongly decreases the host cGAS-STING signaling by targeting IKBKE via its enzymatic activity. Also impairs host FOXJ1-mediated antiviral effect via degradation of FOXJ1. The chain is SUMO-1 cysteine protease S273R from Ornithodoros (relapsing fever ticks).